The primary structure comprises 473 residues: 3-isopropylmalate dehydratase large subunit (473 aa).

Residues cysteine 355, cysteine 415, and cysteine 418 each coordinate [4Fe-4S] cluster. The segment at proline 423–leucine 452 is disordered.

This sequence belongs to the aconitase/IPM isomerase family. LeuC type 1 subfamily. As to quaternary structure, heterodimer of LeuC and LeuD. It depends on [4Fe-4S] cluster as a cofactor.

The catalysed reaction is (2R,3S)-3-isopropylmalate = (2S)-2-isopropylmalate. The protein operates within amino-acid biosynthesis; L-leucine biosynthesis; L-leucine from 3-methyl-2-oxobutanoate: step 2/4. In terms of biological role, catalyzes the isomerization between 2-isopropylmalate and 3-isopropylmalate, via the formation of 2-isopropylmaleate. The polypeptide is 3-isopropylmalate dehydratase large subunit (Corynebacterium jeikeium (strain K411)).